Consider the following 278-residue polypeptide: Large ribosomal subunit protein uL2 (278 aa).

The disordered stretch occupies residues 208-278; the sequence is AGRSRWMGKR…LIIRHRKGRK (71 aa). Residues 209–219 show a composition bias toward basic residues; the sequence is GRSRWMGKRPQ. Residues 258-270 show a composition bias toward basic and acidic residues; the sequence is KTRDSKKASEKLI.

Belongs to the universal ribosomal protein uL2 family. As to quaternary structure, part of the 50S ribosomal subunit. Forms a bridge to the 30S subunit in the 70S ribosome.

One of the primary rRNA binding proteins. Required for association of the 30S and 50S subunits to form the 70S ribosome, for tRNA binding and peptide bond formation. It has been suggested to have peptidyltransferase activity; this is somewhat controversial. Makes several contacts with the 16S rRNA in the 70S ribosome. The chain is Large ribosomal subunit protein uL2 from Lactobacillus delbrueckii subsp. bulgaricus (strain ATCC 11842 / DSM 20081 / BCRC 10696 / JCM 1002 / NBRC 13953 / NCIMB 11778 / NCTC 12712 / WDCM 00102 / Lb 14).